A 507-amino-acid chain; its full sequence is ATP synthase subunit alpha, chloroplastic (507 aa).

Residue 170 to 177 (GDRQTGKT) coordinates ATP.

This sequence belongs to the ATPase alpha/beta chains family. F-type ATPases have 2 components, CF(1) - the catalytic core - and CF(0) - the membrane proton channel. CF(1) has five subunits: alpha(3), beta(3), gamma(1), delta(1), epsilon(1). CF(0) has four main subunits: a, b, b' and c.

Its subcellular location is the plastid. The protein resides in the chloroplast thylakoid membrane. The enzyme catalyses ATP + H2O + 4 H(+)(in) = ADP + phosphate + 5 H(+)(out). Its function is as follows. Produces ATP from ADP in the presence of a proton gradient across the membrane. The alpha chain is a regulatory subunit. The polypeptide is ATP synthase subunit alpha, chloroplastic (Sorghum bicolor (Sorghum)).